We begin with the raw amino-acid sequence, 240 residues long: Pyridoxine 5'-phosphate synthase (240 aa).

Residue asparagine 7 coordinates 3-amino-2-oxopropyl phosphate. Residue 9 to 10 (DH) coordinates 1-deoxy-D-xylulose 5-phosphate. Arginine 18 contacts 3-amino-2-oxopropyl phosphate. Histidine 43 functions as the Proton acceptor in the catalytic mechanism. Positions 45 and 50 each coordinate 1-deoxy-D-xylulose 5-phosphate. Glutamate 70 functions as the Proton acceptor in the catalytic mechanism. Threonine 100 is a 1-deoxy-D-xylulose 5-phosphate binding site. Catalysis depends on histidine 191, which acts as the Proton donor. Residues glycine 192 and 213–214 (GH) each bind 3-amino-2-oxopropyl phosphate.

It belongs to the PNP synthase family. As to quaternary structure, homooctamer; tetramer of dimers.

It is found in the cytoplasm. It carries out the reaction 3-amino-2-oxopropyl phosphate + 1-deoxy-D-xylulose 5-phosphate = pyridoxine 5'-phosphate + phosphate + 2 H2O + H(+). The protein operates within cofactor biosynthesis; pyridoxine 5'-phosphate biosynthesis; pyridoxine 5'-phosphate from D-erythrose 4-phosphate: step 5/5. Functionally, catalyzes the complicated ring closure reaction between the two acyclic compounds 1-deoxy-D-xylulose-5-phosphate (DXP) and 3-amino-2-oxopropyl phosphate (1-amino-acetone-3-phosphate or AAP) to form pyridoxine 5'-phosphate (PNP) and inorganic phosphate. This is Pyridoxine 5'-phosphate synthase from Synechococcus elongatus (strain ATCC 33912 / PCC 7942 / FACHB-805) (Anacystis nidulans R2).